The following is a 271-amino-acid chain: (+)-cis,trans-nepetalactol synthase NEPS1 (271 aa).

Residues Gly-24–Gly-30, Asp-49–Gln-51, Asp-72–Val-73, and Asn-99 each bind NAD(+). Thr-154 and Tyr-167 together coordinate substrate. Residues Tyr-167, Lys-171, and Val-200–Ala-205 contribute to the NAD(+) site. Tyr-167 (proton acceptor) is an active-site residue.

It belongs to the short-chain dehydrogenases/reductases (SDR) family.

The enzyme catalyses (S)-8-oxocitronellyl enol = cis-trans-nepetalactol. It carries out the reaction cis-cis-nepetalactol + NAD(+) = cis-cis-nepetalactone + NADH + H(+). It catalyses the reaction cis-trans-nepetalactol + NAD(+) = cis-trans-nepetalactone + NADH + H(+). Bifunctional enzyme that possesses cyclase and dehydrogenase activities. Functions as a non-oxidoreductive cyclase to promote the formation of cis-trans-nepetalactol. Functions as dehydrogenase to oxidize cis-cis-nepetalactol and cis-trans-nepetalactol into nepetalactones, metabolites that are both insect-repellent and have euphoric effect in cats. Binds NAD(+) as classical short-chain dehydrogenase/reductase (SDR), but does not utilize it for its redox-neutral cyclase activity. The polypeptide is (+)-cis,trans-nepetalactol synthase NEPS1 (Nepeta racemosa (Catmint)).